Consider the following 828-residue polypeptide: MTRSPLHRLIFGGLRRLLYLWVRSETINQSSMTLNLDRSRPVFYALPSPSLTDLAVLDHECTKAGLPRPVLPVAVGPLQEPAAFFYLTPDPDWLGRQDKSGAPPTLERLVAAVSQHAEEDAQIIPVSVFWGQTPASESSPWKLLFADSWAVTGRLRRLLTVLILGRKTRVQFSAPIHLRELVQHNKGHARTVRMAQRLMRVHFRNLKTAVIGPDISHRRNLVKGLVHAPLVRQAIADEAQRENLPLAKAEAQALRYGNEIASDYTYTVIRFLEVVLSWFWNKIYDGIKVNHIEQVQGIAPGHEVIYVPCHRSHIDYLLLSYLLFRNGLTPPHVAAGINLNMPVVGNLLRRGGAFFMRRTFKGNPLYTAVFNEYLHTLYTKGFPVEYFVEGGRSRTGRMLQPRTGMLAITLRSFLRSSRTPIVFVPVYIGYERVLEGRTYLGELRGASKKKESVLDIFKVFGALKQRFGQVYVNFGEPIRLAGFLDQQQPGWREQDHGPQYRPDWLNATTTRLGETVARHLNEAAAINPVNLVALALLSTSRLALDERALTRVLDLYLALLRQVPYSPHTTLPDGDGQALIEHVRSMNLVAEQKDALGRILFLDEGNAVLMTYYRNNVLHIFALPALLASFFLSSSRMSRELLGQYVHALYPYLQAELFLRWAPEQLDEVIDQWLAALVEQGLLRQENDVYVRPAPSSRQFVLLTLLARTITQTLQRFYMATSLLINSGQNSLSAEALEDLCVMMAQRLSILHGLNAPEFFDKTLFRHFIQTLLQQGVLHTDTQGKLGYHDKLGELAEGVAKRVLSAELRLSIRQVALHRDDGLESSTI.

Residues 309-314 carry the HXXXXD motif motif; that stretch reads CHRSHI.

It belongs to the GPAT/DAPAT family.

The protein localises to the cell inner membrane. It catalyses the reaction sn-glycerol 3-phosphate + an acyl-CoA = a 1-acyl-sn-glycero-3-phosphate + CoA. The protein operates within phospholipid metabolism; CDP-diacylglycerol biosynthesis; CDP-diacylglycerol from sn-glycerol 3-phosphate: step 1/3. This Pseudomonas putida (strain GB-1) protein is Glycerol-3-phosphate acyltransferase.